The sequence spans 431 residues: Serine--tRNA ligase (431 aa).

237–239 (TAE) is a binding site for L-serine. Residue 268–270 (RSE) participates in ATP binding. Glu291 contributes to the L-serine binding site. Residue 355–358 (EISS) participates in ATP binding. L-serine is bound at residue Ser390.

The protein belongs to the class-II aminoacyl-tRNA synthetase family. Type-1 seryl-tRNA synthetase subfamily. Homodimer. The tRNA molecule binds across the dimer.

The protein localises to the cytoplasm. It carries out the reaction tRNA(Ser) + L-serine + ATP = L-seryl-tRNA(Ser) + AMP + diphosphate + H(+). The catalysed reaction is tRNA(Sec) + L-serine + ATP = L-seryl-tRNA(Sec) + AMP + diphosphate + H(+). It functions in the pathway aminoacyl-tRNA biosynthesis; selenocysteinyl-tRNA(Sec) biosynthesis; L-seryl-tRNA(Sec) from L-serine and tRNA(Sec): step 1/1. Catalyzes the attachment of serine to tRNA(Ser). Is also able to aminoacylate tRNA(Sec) with serine, to form the misacylated tRNA L-seryl-tRNA(Sec), which will be further converted into selenocysteinyl-tRNA(Sec). In Neisseria gonorrhoeae (strain ATCC 700825 / FA 1090), this protein is Serine--tRNA ligase.